The primary structure comprises 322 residues: Protein-methionine-sulfoxide reductase catalytic subunit MsrP (322 aa).

The segment at residues 1 to 59 is a signal peptide (tat-type signal); the sequence is MSLRDALKTPSSEITDEAVYRDRRRLLQLFALTPALSVAGCAEADPPPPPKTVVTPAQA. Residues Asn79, 82–83, Cys137, Thr172, Asn220, Arg225, and 236–238 each bind Mo-molybdopterin; these read YE and SIK.

The protein belongs to the MsrP family. Heterodimer of a catalytic subunit (MsrP) and a heme-binding subunit (MsrQ). The cofactor is Mo-molybdopterin. In terms of processing, predicted to be exported by the Tat system. The position of the signal peptide cleavage has not been experimentally proven.

It localises to the periplasm. It catalyses the reaction L-methionyl-[protein] + a quinone + H2O = L-methionyl-(S)-S-oxide-[protein] + a quinol. It carries out the reaction L-methionyl-[protein] + a quinone + H2O = L-methionyl-(R)-S-oxide-[protein] + a quinol. Part of the MsrPQ system that repairs oxidized periplasmic proteins containing methionine sulfoxide residues (Met-O), using respiratory chain electrons. Thus protects these proteins from oxidative-stress damage caused by reactive species of oxygen and chlorine generated by the host defense mechanisms. MsrPQ is essential for the maintenance of envelope integrity under bleach stress, rescuing a wide series of structurally unrelated periplasmic proteins from methionine oxidation. The catalytic subunit MsrP is non-stereospecific, being able to reduce both (R-) and (S-) diastereoisomers of methionine sulfoxide. This chain is Protein-methionine-sulfoxide reductase catalytic subunit MsrP, found in Xanthomonas campestris pv. campestris (strain ATCC 33913 / DSM 3586 / NCPPB 528 / LMG 568 / P 25).